The following is a 461-amino-acid chain: ATP-dependent protease ATPase subunit HslU (461 aa).

Residues Ile-18 and 60–65 contribute to the ATP site; that span reads GVGKTE. The tract at residues 157 to 178 is disordered; it reads EGSSVKPEPTAQQKESRQKMRK. Residues Asp-273, Glu-339, and Arg-411 each coordinate ATP.

Belongs to the ClpX chaperone family. HslU subfamily. A double ring-shaped homohexamer of HslV is capped on each side by a ring-shaped HslU homohexamer. The assembly of the HslU/HslV complex is dependent on binding of ATP.

It localises to the cytoplasm. Its function is as follows. ATPase subunit of a proteasome-like degradation complex; this subunit has chaperone activity. The binding of ATP and its subsequent hydrolysis by HslU are essential for unfolding of protein substrates subsequently hydrolyzed by HslV. HslU recognizes the N-terminal part of its protein substrates and unfolds these before they are guided to HslV for hydrolysis. The sequence is that of ATP-dependent protease ATPase subunit HslU from Magnetococcus marinus (strain ATCC BAA-1437 / JCM 17883 / MC-1).